The primary structure comprises 128 residues: MKHKYNTLSWYKKERSTQLRRFIVHQPEVGLFFFLRDVVYNYITEKTTCRCPLTQERPCDTGGKFGRIWICQPEELGKMQIWICQPEELGKMQIDKNRTMVQQMWYIWYGGLDTSTNSLLPILVRGMA.

This is an uncharacterized protein from Homo sapiens (Human).